A 735-amino-acid polypeptide reads, in one-letter code: Serine/threonine-protein kinase BRSK2 (735 aa).

Positions Tyr20–Tyr271 constitute a Protein kinase domain. ATP contacts are provided by residues Leu26–Val34 and Lys49. Asp142 acts as the Proton acceptor in catalysis. Thr175 carries the phosphothreonine; by LKB1 modification. Thr261 carries the phosphothreonine; by PKA modification. At Ser295 the chain carries Phosphoserine. In terms of domain architecture, UBA spans Asp298–Asp340. Basic and acidic residues predominate over residues Pro346–Asp367. 3 disordered regions span residues Pro346 to Trp476, Phe493 to Ser514, and Lys682 to Pro735. Phosphoserine occurs at positions 368, 383, 394, 413, 417, 424, and 428. Low complexity predominate over residues Ser411–Pro429. Pro residues predominate over residues Thr432–Lys446. The residue at position 456 (Ser456) is a Phosphoserine. A phosphothreonine mark is found at Thr460, Thr464, and Thr510. Phosphoserine occurs at positions 513 and 514.

This sequence belongs to the protein kinase superfamily. CAMK Ser/Thr protein kinase family. SNF1 subfamily. As to quaternary structure, interacts with FZR1, a regulatory subunit of the APC ubiquitin ligase complex. Interacts with COPS5. Interacts with PAK1. Mg(2+) serves as cofactor. In terms of processing, may be phosphorylated at Thr-261 by PKA. Phosphorylated at Thr-175 by STK11/LKB1 in complex with STE20-related adapter-alpha (STRADA) pseudo kinase and CAB39. Not phosphorylated at Thr-175 by CaMKK2. In contrast, it is phosphorylated and activated by CaMKK1. May be inactivated via dephosphorylation of Thr-175 by PP2C. Polyubiquitinated by the APC complex in conjunction with FZR1, leading to its proteasomal degradation. Targeted for proteasomal degradation by interaction with COPS5. BRSK2 levels change during the cell cycle. BRSK2 levels are low at the G1/S boundary and gradually increase as cells progress into G2 phase. BRSK2 levels decrease rapidly at the end of mitosis.

It localises to the cytoplasm. Its subcellular location is the cytoskeleton. It is found in the microtubule organizing center. The protein localises to the centrosome. The protein resides in the perinuclear region. It localises to the endoplasmic reticulum. The catalysed reaction is L-seryl-[protein] + ATP = O-phospho-L-seryl-[protein] + ADP + H(+). It carries out the reaction L-threonyl-[protein] + ATP = O-phospho-L-threonyl-[protein] + ADP + H(+). It catalyses the reaction L-seryl-[tau protein] + ATP = O-phospho-L-seryl-[tau protein] + ADP + H(+). The enzyme catalyses L-threonyl-[tau protein] + ATP = O-phospho-L-threonyl-[tau protein] + ADP + H(+). With respect to regulation, activated by phosphorylation on Thr-175 by STK11/LKB1. In terms of biological role, serine/threonine-protein kinase that plays a key role in polarization of neurons and axonogenesis, cell cycle progress and insulin secretion. Phosphorylates CDK16, CDC25C, MAPT/TAU, PAK1 and WEE1. Following phosphorylation and activation by STK11/LKB1, acts as a key regulator of polarization of cortical neurons, probably by mediating phosphorylation of microtubule-associated proteins such as MAPT/TAU at 'Thr-523' and 'Ser-573'. Also regulates neuron polarization by mediating phosphorylation of WEE1 at 'Ser-642' in post-mitotic neurons, leading to down-regulate WEE1 activity in polarized neurons. Plays a role in the regulation of the mitotic cell cycle progress and the onset of mitosis. Plays a role in the regulation of insulin secretion in response to elevated glucose levels, probably via phosphorylation of CDK16 and PAK1. While BRSK2 phosphorylated at Thr-175 can inhibit insulin secretion, BRSK2 phosphorylated at Thr-261 can promote insulin secretion. Regulates reorganization of the actin cytoskeleton. May play a role in the apoptotic response triggered by endoplasmic reticulum (ER) stress. This is Serine/threonine-protein kinase BRSK2 (Brsk2) from Rattus norvegicus (Rat).